The chain runs to 466 residues: Probable periplasmic serine protease do/HhoA-like (466 aa).

The N-terminal stretch at 1 to 29 (MKKTRFVLNSIALGLSVLSTSFVAHVAQA) is a signal peptide. Active-site charge relay system residues include H120, D150, and S226. PDZ domains lie at 270-361 (ILEF…LRDG) and 367-458 (KMKL…LRGD).

Belongs to the peptidase S1C family.

Its subcellular location is the periplasm. The sequence is that of Probable periplasmic serine protease do/HhoA-like from Haemophilus influenzae (strain ATCC 51907 / DSM 11121 / KW20 / Rd).